We begin with the raw amino-acid sequence, 541 residues long: Glycogen synthase (541 aa).

K17 serves as a coordination point for ADP-alpha-D-glucose. Residues 497–541 are disordered; it reads LARPASPPDTAPVGKPARRRRTTALSTTARAHPVARAAGREKIRA.

It belongs to the glycosyltransferase 1 family. Bacterial/plant glycogen synthase subfamily.

The catalysed reaction is [(1-&gt;4)-alpha-D-glucosyl](n) + ADP-alpha-D-glucose = [(1-&gt;4)-alpha-D-glucosyl](n+1) + ADP + H(+). Its pathway is glycan biosynthesis; glycogen biosynthesis. In terms of biological role, synthesizes alpha-1,4-glucan chains using ADP-glucose. This chain is Glycogen synthase, found in Ralstonia nicotianae (strain ATCC BAA-1114 / GMI1000) (Ralstonia solanacearum).